The sequence spans 107 residues: UPF0473 protein Ldb1604 (107 aa).

The protein belongs to the UPF0473 family.

In Lactobacillus delbrueckii subsp. bulgaricus (strain ATCC 11842 / DSM 20081 / BCRC 10696 / JCM 1002 / NBRC 13953 / NCIMB 11778 / NCTC 12712 / WDCM 00102 / Lb 14), this protein is UPF0473 protein Ldb1604.